Here is a 355-residue protein sequence, read N- to C-terminus: Peptide chain release factor 1 (355 aa).

Gln231 carries the N5-methylglutamine modification.

It belongs to the prokaryotic/mitochondrial release factor family. Methylated by PrmC. Methylation increases the termination efficiency of RF1.

The protein resides in the cytoplasm. Its function is as follows. Peptide chain release factor 1 directs the termination of translation in response to the peptide chain termination codons UAG and UAA. The chain is Peptide chain release factor 1 from Nautilia profundicola (strain ATCC BAA-1463 / DSM 18972 / AmH).